Here is a 204-residue protein sequence, read N- to C-terminus: Oocyte-specific homeobox protein 1 (204 aa).

The tract at residues 28–73 (EPARNLAFQMRQSPLVTPGSTTKSSLSVPERNLLKQESQGPSRQSG) is disordered. Composition is skewed to polar residues over residues 37-54 (MRQS…SSLS) and 62-72 (KQESQGPSRQS). A DNA-binding region (homeobox) is located at residues 94 to 153 (FRKERTVYTKEQQGLLQKHFDECQYPNKKKIVELALSVGVTKREIKIWFKNNRAKYRRMN).

Belongs to the paired homeobox family. Obox subfamily. As to expression, specifically expressed in oocytes and early embryos.

Its subcellular location is the nucleus. Its function is as follows. Transcription factor required for zygotic genome activation (ZGA), a critical event in early embryonic development during which the developmental control passes from maternally provided mRNAs to the expression of the zygotic genome after fertilization. Together with other Obox family members, required in early two-cell stage embryos to kick-start the major ZGA wave by facilitating RNA Polymerase II 'pre-configuration', during which RNA Polymerase II relocates from the initial one-cell stage binding targets to ZGA gene promoters and distal enhancers. Mechanistically, promotes recruitment of RNA Polymerase II from (CG-rich) non-ZGA genes to (CG-poor) ZGA genes at the two-cell stage. Binds to regulatory DNA sequences containing a 5'-ACNCCTTTAATCCCAG-3' sequence motif. Most maternal and zygotic Obox family proteins can compensate for one another. In addition to its role in ZGA, promotes embryonic stem cell pluripotency. The polypeptide is Oocyte-specific homeobox protein 1 (Mus musculus (Mouse)).